Here is an 841-residue protein sequence, read N- to C-terminus: Rho guanine nucleotide exchange factor 15 (841 aa).

Disordered stretches follow at residues 1 to 179 (MSAQ…QARA), 239 to 261 (RRAS…HPAV), and 279 to 333 (KPPK…REEE). A compositionally biased stretch (polar residues) spans 39-53 (NGSSPQELPRNSNDA). A compositionally biased stretch (low complexity) spans 65–110 (PPAASLKPPALLPPSASRASLDSQTSPDSPSSTPTPSPVSRRSASP). Phosphoserine occurs at positions 107 and 109. Residues 111 to 124 (EPAPRSPVPPPKPS) show a composition bias toward pro residues. Y353 carries the post-translational modification Phosphotyrosine; by EPHB2. Residues 417–601 (RMQESLFEVV…SKIIERCSAE (185 aa)) enclose the DH domain. Residues 765 to 793 (ESSAPAKTEGRSLESRAAPKHLHKTPEGW) are disordered.

As to quaternary structure, interacts with EPHB2. Interacts with EPHA4. Post-translationally, phosphorylated on tyrosine residues upon EFNA1 stimulation. EPHB2-dependent phosphorylation at Tyr-353 triggers UBE3A-mediated ubiquitination. In terms of processing, ubiquitinated; UBE3A-mediated ubiquitination and degradation by the proteasome promotes EFNB1-dependent synapse formation. As to expression, expressed in the vascular smooth muscle of coronary artery.

It localises to the cell projection. The protein localises to the dendrite. Specific GEF for RhoA activation. Does not activate RAC1 or CDC42. Regulates vascular smooth muscle contractility. Negatively regulates excitatory synapse development by suppressing the synapse-promoting activity of EPHB2. The sequence is that of Rho guanine nucleotide exchange factor 15 (ARHGEF15) from Homo sapiens (Human).